Here is a 198-residue protein sequence, read N- to C-terminus: Peroxiredoxin-2 (198 aa).

Alanine 2 bears the N-acetylalanine mark. Residues 6-164 (AHIGKPAPDF…ALRLVQAFQY (159 aa)) enclose the Thioredoxin domain. The Cysteine sulfenic acid (-SOH) intermediate role is filled by cysteine 51. Position 112 is a phosphoserine (serine 112). Residue threonine 182 is modified to Phosphothreonine. Lysine 196 bears the N6-acetyllysine mark.

The protein belongs to the peroxiredoxin family. AhpC/Prx1 subfamily. As to quaternary structure, homodimer; disulfide-linked, upon oxidation. 5 homodimers assemble to form a ring-like decamer. Interacts with TIPIN. The enzyme can be inactivated by further oxidation of the cysteine sulfenic acid (C(P)-SOH) to sulphinic acid (C(P)-SO2H) instead of its condensation to a disulfide bond. It can be reactivated by forming a transient disulfide bond with sulfiredoxin SRXN1, which reduces the cysteine sulfinic acid in an ATP- and Mg-dependent manner. Post-translationally, acetylation increases resistance to transition to high molecular-mass complexes. Deacetylated by HDAC6 which decreases reducing activity.

The protein localises to the cytoplasm. The enzyme catalyses a hydroperoxide + [thioredoxin]-dithiol = an alcohol + [thioredoxin]-disulfide + H2O. Thiol-specific peroxidase that catalyzes the reduction of hydrogen peroxide and organic hydroperoxides to water and alcohols, respectively. Plays a role in cell protection against oxidative stress by detoxifying peroxides and as sensor of hydrogen peroxide-mediated signaling events. Might participate in the signaling cascades of growth factors and tumor necrosis factor-alpha by regulating the intracellular concentrations of H(2)O(2). The sequence is that of Peroxiredoxin-2 (PRDX2) from Cricetulus griseus (Chinese hamster).